We begin with the raw amino-acid sequence, 160 residues long: Large ribosomal subunit protein uL11 (160 aa).

It belongs to the universal ribosomal protein uL11 family. In terms of assembly, part of the ribosomal stalk of the 50S ribosomal subunit. Interacts with L10 and the large rRNA to form the base of the stalk. L10 forms an elongated spine to which L12 dimers bind in a sequential fashion forming a multimeric L10(L12)X complex.

In terms of biological role, forms part of the ribosomal stalk which helps the ribosome interact with GTP-bound translation factors. The chain is Large ribosomal subunit protein uL11 from Nanoarchaeum equitans (strain Kin4-M).